We begin with the raw amino-acid sequence, 352 residues long: DNA polymerase IV (352 aa).

A UmuC domain is found at 6 to 187 (IIHIDCDCFY…LPVSKLHGVG (182 aa)). Residues D10 and D105 each coordinate Mg(2+). The active site involves E106.

This sequence belongs to the DNA polymerase type-Y family. Monomer. Mg(2+) serves as cofactor.

The protein resides in the cytoplasm. The catalysed reaction is DNA(n) + a 2'-deoxyribonucleoside 5'-triphosphate = DNA(n+1) + diphosphate. Its function is as follows. Poorly processive, error-prone DNA polymerase involved in untargeted mutagenesis. Copies undamaged DNA at stalled replication forks, which arise in vivo from mismatched or misaligned primer ends. These misaligned primers can be extended by PolIV. Exhibits no 3'-5' exonuclease (proofreading) activity. May be involved in translesional synthesis, in conjunction with the beta clamp from PolIII. This chain is DNA polymerase IV, found in Ectopseudomonas mendocina (strain ymp) (Pseudomonas mendocina).